A 617-amino-acid chain; its full sequence is MADLPQKVSNLSINNKENGGDGGKSSYVPPHLRSRGKPSFERSTPKQEDKVTGGDFFRRAGRQTGNNGGFFGFSKERNGGTSANYNRGGSSNYKSSGNRWVNGKHIPGPKNAKLEAELFGVHEDPDYHSSGIKFDNYDDIPVDASGKDVPEPILDFSSPPLDELLMENIKLASFTKPTPVQKYSIPIVTKGRDLMACAQTGSGKTGGFLFPLFTELFRSGPSPVPEKAQSFYSRKGYPSALVLAPTRELATQIFEEARKFTYRSWVRPCVVYGGAPIGNQMREVDRGCDLLVATPGRLNDLLERGKVSLANIKYLVLDEADRMLDMGFEPQIRHIVEECDMPSVENRQTLMFSATFPVDIQHLARDFLDNYIFLSVGRVGSTSENITQRILYVDDMDKKSALLDLLSAEHKGLTLIFVETKRMADQLTDFLIMQNFKATAIHGDRTQAERERALSAFKANVADILVATAVAARGLDIPNVTHVINYDLPSDIDDYVHRIGRTGRAGNTGVATSFFNSNNQNIVKGLMEILNEANQEVPTFLSDLSRQNSRGGRTRGGGGFFNSRNNGSRDYRKHGGNGSFGSTRPRNTGTSNWGSIGGGFRNDNEKNGYGNSNASWW.

The interval 1–90 is disordered; that stretch reads MADLPQKVSN…TSANYNRGGS (90 aa). The span at 7–17 shows a compositional bias: polar residues; sequence KVSNLSINNKE. Positions 38–58 are enriched in basic and acidic residues; sequence PSFERSTPKQEDKVTGGDFFR. Positions 79–90 are enriched in polar residues; the sequence is GGTSANYNRGGS. The Q motif motif lies at 154-182; that stretch reads LDFSSPPLDELLMENIKLASFTKPTPVQK. Residues 185-374 form the Helicase ATP-binding domain; it reads IPIVTKGRDL…RDFLDNYIFL (190 aa). 198 to 205 lines the ATP pocket; that stretch reads AQTGSGKT. The DEAD box signature appears at 318 to 321; sequence DEAD. A Helicase C-terminal domain is found at 385-545; that stretch reads NITQRILYVD…EVPTFLSDLS (161 aa). Residues 542–617 are disordered; sequence SDLSRQNSRG…GYGNSNASWW (76 aa). Residues 580–594 are compositionally biased toward polar residues; the sequence is FGSTRPRNTGTSNWG.

Belongs to the DEAD box helicase family. DDX3/DED1 subfamily.

It localises to the cytoplasm. It carries out the reaction ATP + H2O = ADP + phosphate + H(+). ATP-binding RNA helicase involved in translation initiation. Remodels RNA in response to ADP and ATP concentrations by facilitating disruption, but also formation of RNA duplexes. Redundant to DED1, may be required in conditions in which DED1 expression is decreased. The polypeptide is ATP-dependent RNA helicase DBP1 (DBP1) (Saccharomyces cerevisiae (strain YJM789) (Baker's yeast)).